A 412-amino-acid chain; its full sequence is CCA-adding enzyme (412 aa).

Residues Ser-41 and Lys-44 each contribute to the ATP site. 2 residues coordinate CTP: Ser-41 and Lys-44. Residues Asp-53, Asp-55, and Asp-106 each contribute to the Mg(2+) site. Residues His-129, Lys-149, and Tyr-158 each contribute to the ATP site. CTP contacts are provided by His-129, Lys-149, and Tyr-158.

The protein belongs to the tRNA nucleotidyltransferase/poly(A) polymerase family. Archaeal CCA-adding enzyme subfamily. In terms of assembly, homodimer. Forms a tetramer upon binding two tRNAs. However, tRNA-induced tetramer formation is not required for CCA addition. The cofactor is Mg(2+).

The catalysed reaction is a tRNA precursor + 2 CTP + ATP = a tRNA with a 3' CCA end + 3 diphosphate. The enzyme catalyses a tRNA with a 3' CCA end + 2 CTP + ATP = a tRNA with a 3' CCACCA end + 3 diphosphate. Catalyzes the addition and repair of the essential 3'-terminal CCA sequence in tRNAs without using a nucleic acid template. Adds these three nucleotides in the order of C, C, and A to the tRNA nucleotide-73, using CTP and ATP as substrates and producing inorganic pyrophosphate. tRNA 3'-terminal CCA addition is required both for tRNA processing and repair. Also involved in tRNA surveillance by mediating tandem CCA addition to generate a CCACCA at the 3' terminus of unstable tRNAs. While stable tRNAs receive only 3'-terminal CCA, unstable tRNAs are marked with CCACCA and rapidly degraded. The structural flexibility of RNA controls the choice between CCA versus CCACCA addition: following the first CCA addition cycle, nucleotide-binding to the active site triggers a clockwise screw motion, producing torque on the RNA. This ejects stable RNAs, whereas unstable RNAs are refolded while bound to the enzyme and subjected to a second CCA catalytic cycle. In Saccharolobus shibatae (strain ATCC 51178 / DSM 5389 / JCM 8931 / NBRC 15437 / B12) (Sulfolobus shibatae), this protein is CCA-adding enzyme.